Consider the following 153-residue polypeptide: Large ribosomal subunit protein uL13 (153 aa).

This sequence belongs to the universal ribosomal protein uL13 family. As to quaternary structure, part of the 50S ribosomal subunit.

Its function is as follows. This protein is one of the early assembly proteins of the 50S ribosomal subunit, although it is not seen to bind rRNA by itself. It is important during the early stages of 50S assembly. In Methylobacterium nodulans (strain LMG 21967 / CNCM I-2342 / ORS 2060), this protein is Large ribosomal subunit protein uL13.